The following is a 225-amino-acid chain: UPF0173 metal-dependent hydrolase Aflv_0488 (225 aa).

Belongs to the UPF0173 family.

The protein is UPF0173 metal-dependent hydrolase Aflv_0488 of Anoxybacillus flavithermus (strain DSM 21510 / WK1).